A 417-amino-acid polypeptide reads, in one-letter code: L-rhamnose isomerase (417 aa).

Mn(2+) is bound by residues histidine 260, aspartate 292, and aspartate 294.

Belongs to the rhamnose isomerase family. It depends on Mn(2+) as a cofactor.

The protein localises to the cytoplasm. It catalyses the reaction L-rhamnopyranose = L-rhamnulose. It functions in the pathway carbohydrate degradation; L-rhamnose degradation; glycerone phosphate from L-rhamnose: step 1/3. In terms of biological role, catalyzes the interconversion of L-rhamnose and L-rhamnulose. This Mannheimia succiniciproducens (strain KCTC 0769BP / MBEL55E) protein is L-rhamnose isomerase.